The following is a 289-amino-acid chain: Iron-sulfur cluster carrier protein (289 aa).

The segment covering 1 to 18 (MAEECSGNCDSCGSSSDC) has biased composition (low complexity). Positions 1–20 (MAEECSGNCDSCGSSSDCSD) are disordered. 48 to 55 (GKGGVGKS) lines the ATP pocket.

This sequence belongs to the Mrp/NBP35 ATP-binding proteins family. Homodimer.

Its function is as follows. Binds and transfers iron-sulfur (Fe-S) clusters to target apoproteins. Can hydrolyze ATP. The polypeptide is Iron-sulfur cluster carrier protein (Methanococcus maripaludis (strain DSM 14266 / JCM 13030 / NBRC 101832 / S2 / LL)).